The primary structure comprises 222 residues: Tetratricopeptide repeat protein 9A (222 aa).

2 disordered regions span residues 1 to 49 (MERK…AAAE) and 88 to 116 (KGLL…GRLS). Residues 56–89 (RAHEFKSQGAQCYKDKKFREAIGKYHRALLELKG) form a TPR 1 repeat. A Phosphoserine modification is found at Ser-105. 2 TPR repeats span residues 125–160 (AIEI…LKKE) and 161–194 (GENF…RTQQ).

This sequence belongs to the TTC9 family.

This is Tetratricopeptide repeat protein 9A (TTC9) from Homo sapiens (Human).